We begin with the raw amino-acid sequence, 447 residues long: UDP-glycosyltransferase 76E3 (447 aa).

UDP-alpha-D-glucose-binding positions include S269, 328-330, 345-353, and 367-370; these read APQ, HCGWNSTLE, and QGEQ.

The protein belongs to the UDP-glycosyltransferase family.

The polypeptide is UDP-glycosyltransferase 76E3 (UGT76E3) (Arabidopsis thaliana (Mouse-ear cress)).